A 201-amino-acid chain; its full sequence is Probable molybdenum cofactor guanylyltransferase (201 aa).

Residues 16–18, lysine 28, aspartate 75, and aspartate 107 each bind GTP; that span reads LAG. Aspartate 107 is a binding site for Mg(2+).

It belongs to the MobA family. Requires Mg(2+) as cofactor.

The protein resides in the cytoplasm. The catalysed reaction is Mo-molybdopterin + GTP + H(+) = Mo-molybdopterin guanine dinucleotide + diphosphate. Transfers a GMP moiety from GTP to Mo-molybdopterin (Mo-MPT) cofactor (Moco or molybdenum cofactor) to form Mo-molybdopterin guanine dinucleotide (Mo-MGD) cofactor. The protein is Probable molybdenum cofactor guanylyltransferase of Mycobacterium ulcerans (strain Agy99).